A 273-amino-acid chain; its full sequence is Large ribosomal subunit protein uL2 (273 aa).

Positions 228-273 (IDHPHGGGEGKTSGGRHPVTPWGFSTKGKKTRKNKRTSKFIVKKRK) are disordered. A compositionally biased stretch (basic residues) spans 254–273 (KGKKTRKNKRTSKFIVKKRK).

It belongs to the universal ribosomal protein uL2 family. As to quaternary structure, part of the 50S ribosomal subunit. Forms a bridge to the 30S subunit in the 70S ribosome.

In terms of biological role, one of the primary rRNA binding proteins. Required for association of the 30S and 50S subunits to form the 70S ribosome, for tRNA binding and peptide bond formation. It has been suggested to have peptidyltransferase activity; this is somewhat controversial. Makes several contacts with the 16S rRNA in the 70S ribosome. The protein is Large ribosomal subunit protein uL2 of Rickettsia typhi (strain ATCC VR-144 / Wilmington).